Consider the following 269-residue polypeptide: Ribosomal RNA large subunit methyltransferase E (269 aa).

S-adenosyl-L-methionine is bound by residues Gly48, Trp50, Asp68, Asp86, and Asp111. Lys151 (proton acceptor) is an active-site residue. Residues 198 to 256 enclose the TRAM domain; that stretch reads PVAAGDRIEVTVEERGDEGDGIAYVEGYSIFVSDADVGETVTVEVVDAKPRFGFATRVD.

Belongs to the class I-like SAM-binding methyltransferase superfamily. RNA methyltransferase RlmE family.

It localises to the cytoplasm. The catalysed reaction is uridine(2552) in 23S rRNA + S-adenosyl-L-methionine = 2'-O-methyluridine(2552) in 23S rRNA + S-adenosyl-L-homocysteine + H(+). Specifically methylates the uridine in position 2552 of 23S rRNA at the 2'-O position of the ribose in the fully assembled 50S ribosomal subunit. The polypeptide is Ribosomal RNA large subunit methyltransferase E (Halorubrum lacusprofundi (strain ATCC 49239 / DSM 5036 / JCM 8891 / ACAM 34)).